The primary structure comprises 383 residues: MLRIGLTGGMGAGKSTVARILADLGAVIVDSDVIAREVVAPGTEGLAALVAAFGSDILAADGSLDRPALAAKAFADDAARAKLNSITHPLVGKRTAELIGAAPAEAIVVQDIPLLVENGLAPLMNLVLVVDVPAETRIRRLVEFRGVAEADARARIAAQATDEQRRAVADVLLDNSGPEGAVEQVVRELWERRLVPFERNLRAATPAAPGTSELRVDAERQAQAQRLVARLAVAGGAAAARIEHVGPTAVPDLPARDLLELQIVVADAAAATGLRDALGAAGFPAMSGEGSGALRAAAWHGSADPGRPAVVAVRVEGTPEQRFASALGERLRGDAALREEYLDVARKAEAEAAGSVGAAAGAAFDAVLHPWLAEVAERLLGTV.

A DPCK domain is found at 3–201 (RIGLTGGMGA…RRLVPFERNL (199 aa)). 11 to 16 (GAGKST) is an ATP binding site. Residues 196-383 (PFERNLRAAT…EVAERLLGTV (188 aa)) are UPF0157.

In the N-terminal section; belongs to the CoaE family. The protein in the C-terminal section; belongs to the UPF0157 (GrpB) family.

The protein resides in the cytoplasm. The catalysed reaction is 3'-dephospho-CoA + ATP = ADP + CoA + H(+). It functions in the pathway cofactor biosynthesis; coenzyme A biosynthesis; CoA from (R)-pantothenate: step 5/5. Catalyzes the phosphorylation of the 3'-hydroxyl group of dephosphocoenzyme A to form coenzyme A. This chain is Dephospho-CoA kinase, found in Nocardia farcinica (strain IFM 10152).